A 652-amino-acid chain; its full sequence is Drebrin (652 aa).

Ala2 bears the N-acetylalanine mark. Residues 5–134 (GFAAHRLELL…DPGAIGQRLS (130 aa)) form the ADF-H domain. Composition is skewed to basic and acidic residues over residues 211–236 (MEQERLEQEERERRYREREEQIEEHR) and 288–298 (DNPREFFKQQE). 2 disordered regions span residues 211-350 (MEQE…YITC) and 371-652 (SAAG…GGGL). The segment covering 328 to 340 (SGPPSSSSSSSSP) has biased composition (low complexity). The segment covering 507-517 (PDTPAGPPVPP) has biased composition (pro residues). Composition is skewed to acidic residues over residues 540–554 (QHEEVEEEEEEEEAT) and 640–652 (PLPEEEESFGGGL).

Brain neurons.

It localises to the cytoplasm. It is found in the cell projection. The protein resides in the dendrite. Its subcellular location is the cell cortex. The protein localises to the cell junction. It localises to the growth cone. Functionally, actin cytoskeleton-organizing protein that plays a role in the formation of cell projections. Plays a role in dendritic spine morphogenesis and organization, including the localization of the dopamine receptor DRD1 to the dendritic spines. Involved in synaptic plasticity. This chain is Drebrin (DBN1), found in Gallus gallus (Chicken).